A 305-amino-acid chain; its full sequence is Succinate--CoA ligase [ADP-forming] subunit alpha (305 aa).

CoA-binding positions include 17–20 (TGKE), lysine 43, and 96–98 (ITE). Tyrosine 161 contacts substrate. The active-site Tele-phosphohistidine intermediate is the histidine 249.

This sequence belongs to the succinate/malate CoA ligase alpha subunit family. As to quaternary structure, heterotetramer of two alpha and two beta subunits.

It catalyses the reaction succinate + ATP + CoA = succinyl-CoA + ADP + phosphate. The enzyme catalyses GTP + succinate + CoA = succinyl-CoA + GDP + phosphate. The protein operates within carbohydrate metabolism; tricarboxylic acid cycle; succinate from succinyl-CoA (ligase route): step 1/1. In terms of biological role, succinyl-CoA synthetase functions in the citric acid cycle (TCA), coupling the hydrolysis of succinyl-CoA to the synthesis of either ATP or GTP and thus represents the only step of substrate-level phosphorylation in the TCA. The alpha subunit of the enzyme binds the substrates coenzyme A and phosphate, while succinate binding and nucleotide specificity is provided by the beta subunit. The protein is Succinate--CoA ligase [ADP-forming] subunit alpha of Aquifex aeolicus (strain VF5).